Reading from the N-terminus, the 151-residue chain is Deoxyuridine 5'-triphosphate nucleotidohydrolase (151 aa).

R28 contacts Mg(2+). DUTP contacts are provided by residues 72 to 74 (PRS), 86 to 89 (GVID), Y92, G97, I99, and R115.

Belongs to the dUTPase family. Requires Mg(2+) as cofactor.

The catalysed reaction is dUTP + H2O = dUMP + diphosphate + H(+). Its function is as follows. This enzyme is involved in nucleotide metabolism: it produces dUMP, the immediate precursor of thymidine nucleotides and it decreases the intracellular concentration of dUTP so that uracil cannot be incorporated into DNA. The polypeptide is Deoxyuridine 5'-triphosphate nucleotidohydrolase (OPG046) (Monkeypox virus).